A 461-amino-acid polypeptide reads, in one-letter code: Ribulose bisphosphate carboxylase (461 aa).

A substrate-binding site is contributed by Asn-112. The active-site Proton acceptor is Lys-167. Lys-169 serves as a coordination point for substrate. Lys-192, Asp-194, and Glu-195 together coordinate Mg(2+). Position 192 is an N6-carboxylysine (Lys-192). His-288 functions as the Proton acceptor in the catalytic mechanism. Substrate contacts are provided by Arg-289, His-322, and Ser-369.

The protein belongs to the RuBisCO large chain family. Type II subfamily. In terms of assembly, homodimer. Requires Mg(2+) as cofactor.

It catalyses the reaction 2 (2R)-3-phosphoglycerate + 2 H(+) = D-ribulose 1,5-bisphosphate + CO2 + H2O. It carries out the reaction D-ribulose 1,5-bisphosphate + O2 = 2-phosphoglycolate + (2R)-3-phosphoglycerate + 2 H(+). Its function is as follows. RuBisCO catalyzes two reactions: the carboxylation of D-ribulose 1,5-bisphosphate, the primary event in carbon dioxide fixation, as well as the oxidative fragmentation of the pentose substrate. Both reactions occur simultaneously and in competition at the same active site. In Rhodopseudomonas palustris (strain HaA2), this protein is Ribulose bisphosphate carboxylase.